The chain runs to 68 residues: Non-disulfide-bridged peptide 5.6 (68 aa).

A signal peptide spans 1-23 (MKTQVIIFIMAVVFLQLLSQSEA). Positions 37-68 (ELRNIDLDQFDDMFDEPEISAADMRFLQELLK) are excised as a propeptide.

Belongs to the non-disulfide-bridged peptide (NDBP) superfamily. Short antimicrobial peptide (group 4) family. As to expression, expressed by the venom gland.

It localises to the secreted. The protein resides in the target cell membrane. Functionally, antibacterial peptide with activity against both Gram-positive and Gram-negative bacteria probably by forming pores in the cell membrane. Also has weak hemolytic activity. Does not show antifungal activity. This chain is Non-disulfide-bridged peptide 5.6, found in Hoffmannihadrurus gertschi (Scorpion).